Consider the following 614-residue polypeptide: Probable Xaa-Pro aminopeptidase P (614 aa).

4 residues coordinate Mn(2+): Asp-409, Asp-420, Glu-518, and Glu-532.

It belongs to the peptidase M24B family. Mn(2+) is required as a cofactor.

It carries out the reaction Release of any N-terminal amino acid, including proline, that is linked to proline, even from a dipeptide or tripeptide.. Functionally, catalyzes the removal of a penultimate prolyl residue from the N-termini of peptides. The chain is Probable Xaa-Pro aminopeptidase P (ampp) from Aspergillus niger (strain ATCC MYA-4892 / CBS 513.88 / FGSC A1513).